The chain runs to 328 residues: MPLHNLTRFPRLEFIGAPTPLEYLPRFSDYLGREIFIKRDDVTPMAMGGNKLRKLEFLAADALREGADTLITAGAIQSNHVRQTAAVAAKLGLHCVALLENPIGTTAENYLTNGNRLLLDLFNTQIEMCDALTDPNAQLEELATRVEAQGFRPYVIPVGGSNALGALGYVESALEIAQQCEGAVNISSVVVASGSAGTHAGLAVGLEHLMPESELIGVTVSRSVADQLPKVVNLQQAIAKELELTASVEILLWDDYFAPGYGVPNDEGMEAVKLLARLEGILLDPVYTGKAMAGLIDGISQKRFKDEGPILFIHTGGAPALFAYHPHV.

Residue Lys-51 is modified to N6-(pyridoxal phosphate)lysine.

Belongs to the ACC deaminase/D-cysteine desulfhydrase family. In terms of assembly, homodimer. Requires pyridoxal 5'-phosphate as cofactor.

The enzyme catalyses D-cysteine + H2O = hydrogen sulfide + pyruvate + NH4(+) + H(+). In terms of biological role, catalyzes the alpha,beta-elimination reaction of D-cysteine and of several D-cysteine derivatives. It could be a defense mechanism against D-cysteine. This Escherichia coli O157:H7 protein is D-cysteine desulfhydrase.